We begin with the raw amino-acid sequence, 118 residues long: Transcription factor PAR2 (118 aa).

The segment at 1–59 (MEKTLATSHTKRSSPPSPSSAVNTSSTGFNRRTRQRLSDATASVSETDVEDEDEDEEGV) is disordered. Positions 19–30 (SSAVNTSSTGFN) are enriched in polar residues. The 50-residue stretch at 43-92 (SVSETDVEDEDEDEEGVEEKIEALQTIVPGGTELGVDALFEETASYILAL) folds into the bHLH domain. The segment covering 47 to 59 (TDVEDEDEDEEGV) has biased composition (acidic residues).

Belongs to the bHLH protein family. Homodimer.

The protein resides in the nucleus. Functionally, atypical bHLH transcription factor that acts as a negative regulator of a variety of shade avoidance syndrome (SAS) responses, including seedling elongation and photosynthetic pigment accumulation. Acts as a direct transcriptional repressor of two auxin-responsive genes, SAUR15 and SAUR68. May function in integrating shade and hormone transcriptional networks in response to light and auxin changes. The sequence is that of Transcription factor PAR2 (PAR2) from Arabidopsis thaliana (Mouse-ear cress).